The primary structure comprises 91 residues: Small ribosomal subunit protein uS19 (91 aa).

It belongs to the universal ribosomal protein uS19 family.

In terms of biological role, protein S19 forms a complex with S13 that binds strongly to the 16S ribosomal RNA. The polypeptide is Small ribosomal subunit protein uS19 (Methylobacillus flagellatus (strain ATCC 51484 / DSM 6875 / VKM B-1610 / KT)).